We begin with the raw amino-acid sequence, 109 residues long: Flagellar hook-basal body complex protein FliE (109 aa).

The disordered stretch occupies residues 1 to 38; that stretch reads MQAIHNDKSLLSPFSELNTDNRTKREESGNAFKEQKGG. Positions 19–38 are enriched in basic and acidic residues; the sequence is TDNRTKREESGNAFKEQKGG.

This sequence belongs to the FliE family.

Its subcellular location is the bacterial flagellum basal body. The polypeptide is Flagellar hook-basal body complex protein FliE (Helicobacter pylori (strain G27)).